The sequence spans 488 residues: Ribulose bisphosphate carboxylase large chain (488 aa).

Positions 127 and 177 each coordinate substrate. Lys179 serves as the catalytic Proton acceptor. Lys181 contributes to the substrate binding site. The Mg(2+) site is built by Lys205, Asp207, and Glu208. Lys205 carries the post-translational modification N6-carboxylysine. Residue His297 is the Proton acceptor of the active site. Positions 298, 330, and 382 each coordinate substrate.

The protein belongs to the RuBisCO large chain family. Type I subfamily. Heterohexadecamer of 8 large chains and 8 small chains. Mg(2+) serves as cofactor.

It is found in the plastid. The protein resides in the chloroplast. The enzyme catalyses 2 (2R)-3-phosphoglycerate + 2 H(+) = D-ribulose 1,5-bisphosphate + CO2 + H2O. The catalysed reaction is D-ribulose 1,5-bisphosphate + O2 = 2-phosphoglycolate + (2R)-3-phosphoglycerate + 2 H(+). RuBisCO catalyzes two reactions: the carboxylation of D-ribulose 1,5-bisphosphate, the primary event in carbon dioxide fixation, as well as the oxidative fragmentation of the pentose substrate in the photorespiration process. Both reactions occur simultaneously and in competition at the same active site. The protein is Ribulose bisphosphate carboxylase large chain of Porphyra purpurea (Red seaweed).